The chain runs to 323 residues: Phosphatidylglycerol--prolipoprotein diacylglyceryl transferase (323 aa).

The next 3 membrane-spanning stretches (helical) occupy residues 15 to 35 (VIQGIPITWYSLSYIFIILIS), 58 to 78 (FMFSLVLGAILGGRLASTLVY), and 106 to 126 (GMAIHGGFLGAIIAPLITINT). Residue Arg-156 coordinates a 1,2-diacyl-sn-glycero-3-phospho-(1'-sn-glycerol). 2 helical membrane passes run 242 to 262 (GFIFGVYIMLYAFFRFFIEYL) and 289 to 309 (ISMGQILSLALMLSGLIWIIV).

This sequence belongs to the Lgt family.

It is found in the cell inner membrane. It catalyses the reaction L-cysteinyl-[prolipoprotein] + a 1,2-diacyl-sn-glycero-3-phospho-(1'-sn-glycerol) = an S-1,2-diacyl-sn-glyceryl-L-cysteinyl-[prolipoprotein] + sn-glycerol 1-phosphate + H(+). The protein operates within protein modification; lipoprotein biosynthesis (diacylglyceryl transfer). Functionally, catalyzes the transfer of the diacylglyceryl group from phosphatidylglycerol to the sulfhydryl group of the N-terminal cysteine of a prolipoprotein, the first step in the formation of mature lipoproteins. The protein is Phosphatidylglycerol--prolipoprotein diacylglyceryl transferase of Borreliella afzelii (strain PKo) (Borrelia afzelii).